The chain runs to 618 residues: DNA mismatch repair protein MutL (618 aa).

The segment covering 366–378 (AEPTAAREPATPR) has biased composition (low complexity). Residues 366-403 (AEPTAAREPATPRYSDGASGGNGGRQSAGGWPHAQPGY) are disordered. The span at 383 to 392 (ASGGNGGRQS) shows a compositional bias: gly residues.

It belongs to the DNA mismatch repair MutL/HexB family.

This protein is involved in the repair of mismatches in DNA. It is required for dam-dependent methyl-directed DNA mismatch repair. May act as a 'molecular matchmaker', a protein that promotes the formation of a stable complex between two or more DNA-binding proteins in an ATP-dependent manner without itself being part of a final effector complex. This chain is DNA mismatch repair protein MutL, found in Salmonella typhi.